The following is a 470-amino-acid chain: Ribulose bisphosphate carboxylase large chain (470 aa).

Lys-5 bears the N6,N6,N6-trimethyllysine mark. Substrate-binding residues include Asn-114 and Thr-164. Lys-166 acts as the Proton acceptor in catalysis. Lys-168 is a substrate binding site. 3 residues coordinate Mg(2+): Lys-192, Asp-194, and Glu-195. At Lys-192 the chain carries N6-carboxylysine. His-285 functions as the Proton acceptor in the catalytic mechanism. Substrate-binding residues include Arg-286, His-318, and Ser-370.

This sequence belongs to the RuBisCO large chain family. Type I subfamily. As to quaternary structure, heterohexadecamer of 8 large chains and 8 small chains; disulfide-linked. The disulfide link is formed within the large subunit homodimers. Mg(2+) serves as cofactor. In terms of processing, the disulfide bond which can form in the large chain dimeric partners within the hexadecamer appears to be associated with oxidative stress and protein turnover.

It is found in the plastid. The protein resides in the chloroplast. It catalyses the reaction 2 (2R)-3-phosphoglycerate + 2 H(+) = D-ribulose 1,5-bisphosphate + CO2 + H2O. The enzyme catalyses D-ribulose 1,5-bisphosphate + O2 = 2-phosphoglycolate + (2R)-3-phosphoglycerate + 2 H(+). RuBisCO catalyzes two reactions: the carboxylation of D-ribulose 1,5-bisphosphate, the primary event in carbon dioxide fixation, as well as the oxidative fragmentation of the pentose substrate in the photorespiration process. Both reactions occur simultaneously and in competition at the same active site. This is Ribulose bisphosphate carboxylase large chain from Bertiera breviflora.